The following is a 392-amino-acid chain: Erythronate-4-phosphate dehydrogenase (392 aa).

Positions 48 and 69 each coordinate substrate. Asp-149 is an NAD(+) binding site. Arg-215 is an active-site residue. Residue Asp-239 coordinates NAD(+). Glu-244 is a catalytic residue. His-261 acts as the Proton donor in catalysis. Gly-264 contacts NAD(+). A substrate-binding site is contributed by Tyr-265.

It belongs to the D-isomer specific 2-hydroxyacid dehydrogenase family. PdxB subfamily. Homodimer.

Its subcellular location is the cytoplasm. It carries out the reaction 4-phospho-D-erythronate + NAD(+) = (R)-3-hydroxy-2-oxo-4-phosphooxybutanoate + NADH + H(+). It participates in cofactor biosynthesis; pyridoxine 5'-phosphate biosynthesis; pyridoxine 5'-phosphate from D-erythrose 4-phosphate: step 2/5. Its function is as follows. Catalyzes the oxidation of erythronate-4-phosphate to 3-hydroxy-2-oxo-4-phosphonooxybutanoate. The polypeptide is Erythronate-4-phosphate dehydrogenase (Salinibacter ruber (strain DSM 13855 / M31)).